Reading from the N-terminus, the 397-residue chain is Odorant receptor 22b (397 aa).

Topologically, residues 1–49 are cytoplasmic; sequence MLSQFFPHIKEKPLSERVKSRDAFVYLDRVMWSFGWTVPENKRWDLHYK. The helical transmembrane segment at 50 to 70 threads the bilayer; sequence LWSTFVTLLIFILLPISVSVE. The Extracellular segment spans residues 71–85; sequence YIQRFKTFSAGEFLS. The helical transmembrane segment at 86-105 threads the bilayer; the sequence is SIQIGVNMYGSSFKSYLTMM. Over 106 to 143 the chain is Cytoplasmic; that stretch reads GYKKRQEAKMSLDELDKRCVCDEERTIVHRHVALGNFC. Residues 144–164 form a helical membrane-spanning segment; that stretch reads YIFYHIAYTSFLISNFLSFIM. At 165-194 the chain is on the extracellular side; sequence KRIHAWRMYFPYVDPEKQFYISSIAEVILR. Residues 195–215 form a helical membrane-spanning segment; that stretch reads GWAVFMDLCTDVCPLISMVIA. Over 216 to 268 the chain is Cytoplasmic; that stretch reads RCHITLLKQRLRNLRSEPGRTEDEYLKELADCVRDHRLILDYVDALRSVFSGT. The chain crosses the membrane as a helical span at residues 269–289; it reads IFVQFLLIGIVLGLSMINIMF. Topologically, residues 290–295 are extracellular; sequence FSTLST. A helical membrane pass occupies residues 296 to 316; the sequence is GVAVVLFMSCVSMQTFPFCYL. Residues 317–347 are Cytoplasmic-facing; it reads CNMIMDDCQEMADSLFQSDWTSADRRYKSTL. Residues 348-368 form a helical membrane-spanning segment; it reads VYFLHNLQQPIILTAGGVFPI. The Extracellular segment spans residues 369–397; it reads SMQTNLNMVKLAFTVVTIVKQFNLAEKFQ.

Belongs to the insect chemoreceptor superfamily. Heteromeric odorant receptor channel (TC 1.A.69) family. Or2a subfamily. As to quaternary structure, interacts with Orco, via conserved C-terminal cytoplasmic loops. Complexes exist early in the endomembrane system in olfactory sensory neurons (OSNs), coupling these complexes to the conserved ciliary trafficking pathway. In terms of tissue distribution, expressed with Orco in 20-22 sensory neurons on the medial-proximal edge of the antenna. This expression pattern matches the distribution of the large sensilla basiconica. Expression is first seen at 60 hours APF in a subset of cells restricted to a subregion of the developing antenna. Expression continues throughout antennal development. Expressed in the ab3A neuron which responds to ethyl butyrate.

The protein localises to the cell membrane. Functionally, odorant receptor which mediates acceptance or avoidance behavior, depending on its substrates. The odorant receptor repertoire encodes a large collection of odor stimuli that vary widely in identity, intensity, and duration. Involved in the behavioral responses to esters. Complexes with Orco to form odorant-sensing units, providing sensitive and prolonged odorant signaling and calcium permeability. They are necessary and sufficient to promote functional reconstitution of odor-evoked signaling in sensory neurons that normally respond only to carbon dioxide. The sequence is that of Odorant receptor 22b (Or22b) from Drosophila melanogaster (Fruit fly).